A 563-amino-acid polypeptide reads, in one-letter code: Coiled-coil domain-containing protein 38 (563 aa).

Coiled-coil stretches lie at residues 129 to 212, 384 to 415, and 485 to 522; these read KRNT…KTEF, NIEF…RSRL, and ERMK…AVAQ. The tract at residues 521 to 550 is disordered; it reads AQPKKKLGRRLVYHSKPPSANKQQLPLVNE. Positions 523-533 are enriched in basic residues; it reads PKKKLGRRLVY.

In terms of assembly, interacts with CCDC42, CFAP53, IFT88 and ODF2. Interacts with CCDC146. Interacts with TEKT3. Interacts with ubiquitinated histone H2A.

Its subcellular location is the cytoplasm. It localises to the cytoskeleton. It is found in the microtubule organizing center. The protein localises to the centrosome. The protein resides in the perinuclear region. Its subcellular location is the cell projection. It localises to the cilium. It is found in the flagellum. Essential for male fertility. Required for sperm flagellum biogenesis. Also required for acrosome biogenesis. Required for the attachment of developing acrosomes to the nucleus during spermiogenesis and may be involved in the transport of fibrous sheath components. The sequence is that of Coiled-coil domain-containing protein 38 (CCDC38) from Macaca fascicularis (Crab-eating macaque).